The chain runs to 368 residues: Glutamate 5-kinase (368 aa).

ATP is bound at residue Lys11. Residues Ser51, Asp138, and Asn150 each coordinate substrate. ATP is bound by residues 170–171 (TD) and 212–218 (TGGMATK). The PUA domain occupies 276–354 (AGEIIVDHGA…QQISQILGYE (79 aa)).

Belongs to the glutamate 5-kinase family.

The protein localises to the cytoplasm. It carries out the reaction L-glutamate + ATP = L-glutamyl 5-phosphate + ADP. The protein operates within amino-acid biosynthesis; L-proline biosynthesis; L-glutamate 5-semialdehyde from L-glutamate: step 1/2. Catalyzes the transfer of a phosphate group to glutamate to form L-glutamate 5-phosphate. This Photorhabdus laumondii subsp. laumondii (strain DSM 15139 / CIP 105565 / TT01) (Photorhabdus luminescens subsp. laumondii) protein is Glutamate 5-kinase.